We begin with the raw amino-acid sequence, 122 residues long: Large ribosomal subunit protein uL14 (122 aa).

The protein belongs to the universal ribosomal protein uL14 family. In terms of assembly, part of the 50S ribosomal subunit. Forms a cluster with proteins L3 and L19. In the 70S ribosome, L14 and L19 interact and together make contacts with the 16S rRNA in bridges B5 and B8.

Binds to 23S rRNA. Forms part of two intersubunit bridges in the 70S ribosome. This is Large ribosomal subunit protein uL14 from Desulforudis audaxviator (strain MP104C).